A 524-amino-acid chain; its full sequence is M phase phosphoprotein 10 (524 aa).

The Nuclear localization signal 1 motif lies at 85-92 (VKRFAKNP). 2 disordered regions span residues 100–243 (KLAL…KLGK) and 259–283 (KLKDLSEDEEAEIENKGNEKLSTHE). Acidic residues predominate over residues 109–168 (DDIDEMDMDGFDSDDVDDEDKEIESNDSEGEDEEEEEEDEEEEEEEEEEEEEEKDGDNEG). Positions 131–165 (IESNDSEGEDEEEEEEDEEEEEEEEEEEEEEKDGD) form a coiled coil. Positions 169–180 (IEDKFFKIKELE) are enriched in basic and acidic residues. Positions 181–191 (EFLEEGEAEEY) are enriched in acidic residues. The segment covering 196-207 (KNKKGVAQRKKQ) has biased composition (basic residues). Residues 210–238 (SDDEDEEDDDDEEEDVEFDAFAGGDDEET) show a composition bias toward acidic residues. The stretch at 257-302 (KMKLKDLSEDEEAEIENKGNEKLSTHERARLKLQSKIEQMEKANLD) forms a coiled coil. Basic and acidic residues predominate over residues 271 to 283 (IENKGNEKLSTHE). The Nuclear localization signal 2 signature appears at 373–380 (GKREAKEL). A disordered region spans residues 479-524 (KGDIKDESELTQEDRKRRRANKKRKFKAESANEPPKKALDTSTKNP). The span at 480–493 (GDIKDESELTQEDR) shows a compositional bias: basic and acidic residues. The span at 494–504 (KRRRANKKRKF) shows a compositional bias: basic residues. Over residues 505–517 (KAESANEPPKKAL) the composition is skewed to basic and acidic residues.

This sequence belongs to the MPP10 family. In terms of assembly, component of the ribosomal small subunit (SSU) processome. Interacts with THAL in the nucleus.

It is found in the nucleus. It localises to the nucleolus. Involved in nucleolar processing of pre-18S ribosomal RNA. In Arabidopsis thaliana (Mouse-ear cress), this protein is M phase phosphoprotein 10.